The following is a 495-amino-acid chain: Guanosine-5'-triphosphate,3'-diphosphate pyrophosphatase (495 aa).

It belongs to the GppA/Ppx family. GppA subfamily.

The catalysed reaction is guanosine 3'-diphosphate 5'-triphosphate + H2O = guanosine 3',5'-bis(diphosphate) + phosphate + H(+). It functions in the pathway purine metabolism; ppGpp biosynthesis; ppGpp from GTP: step 2/2. In terms of biological role, catalyzes the conversion of pppGpp to ppGpp. Guanosine pentaphosphate (pppGpp) is a cytoplasmic signaling molecule which together with ppGpp controls the 'stringent response', an adaptive process that allows bacteria to respond to amino acid starvation, resulting in the coordinated regulation of numerous cellular activities. The protein is Guanosine-5'-triphosphate,3'-diphosphate pyrophosphatase of Enterobacter sp. (strain 638).